The primary structure comprises 191 residues: Pyridoxal 5'-phosphate synthase subunit PdxT (191 aa).

L-glutamine is bound at residue 48–50 (GES). The Nucleophile role is filled by C79. L-glutamine-binding positions include R106 and 134-135 (IR). Catalysis depends on charge relay system residues H170 and E172.

This sequence belongs to the glutaminase PdxT/SNO family. As to quaternary structure, in the presence of PdxS, forms a dodecamer of heterodimers. Only shows activity in the heterodimer.

The catalysed reaction is aldehydo-D-ribose 5-phosphate + D-glyceraldehyde 3-phosphate + L-glutamine = pyridoxal 5'-phosphate + L-glutamate + phosphate + 3 H2O + H(+). The enzyme catalyses L-glutamine + H2O = L-glutamate + NH4(+). Its pathway is cofactor biosynthesis; pyridoxal 5'-phosphate biosynthesis. Catalyzes the hydrolysis of glutamine to glutamate and ammonia as part of the biosynthesis of pyridoxal 5'-phosphate. The resulting ammonia molecule is channeled to the active site of PdxS. In Oenococcus oeni (strain ATCC BAA-331 / PSU-1), this protein is Pyridoxal 5'-phosphate synthase subunit PdxT.